Reading from the N-terminus, the 802-residue chain is Elongation factor G, mitochondrial (802 aa).

A mitochondrion-targeting transit peptide spans 1–24; that stretch reads MRYPSLARLPRRALSGLARAPVRL. The 288-residue stretch at 100–387 folds into the tr-type G domain; the sequence is SRVRNIGIAA…GVIDYLPNPS (288 aa). Residues 109-116, 185-189, and 239-242 each bind GTP; these read AHIDSGKT, DTPGH, and NKMD.

Belongs to the TRAFAC class translation factor GTPase superfamily. Classic translation factor GTPase family. EF-G/EF-2 subfamily.

The protein resides in the mitochondrion. Its pathway is protein biosynthesis; polypeptide chain elongation. Its function is as follows. Mitochondrial GTPase that catalyzes the GTP-dependent ribosomal translocation step during translation elongation. During this step, the ribosome changes from the pre-translocational (PRE) to the post-translocational (POST) state as the newly formed A-site-bound peptidyl-tRNA and P-site-bound deacylated tRNA move to the P and E sites, respectively. Catalyzes the coordinated movement of the two tRNA molecules, the mRNA and conformational changes in the ribosome. The chain is Elongation factor G, mitochondrial (mef1) from Aspergillus terreus (strain NIH 2624 / FGSC A1156).